Reading from the N-terminus, the 333-residue chain is Holliday junction branch migration complex subunit RuvB (333 aa).

Positions 1-182 (MDERLLSGES…FGVLSRLEYY (182 aa)) are large ATPase domain (RuvB-L). Residues Leu21, Arg22, Gly63, Lys66, Thr67, Thr68, 129-131 (EDF), Arg172, Tyr182, and Arg219 each bind ATP. Residue Thr67 coordinates Mg(2+). Positions 183-253 (TVDQLSAIVE…ITQMALELLQ (71 aa)) are small ATPAse domain (RuvB-S). The tract at residues 256–333 (KLGLDHIDHK…EHFGMEIPKV (78 aa)) is head domain (RuvB-H). DNA contacts are provided by Arg311 and Arg316.

Belongs to the RuvB family. As to quaternary structure, homohexamer. Forms an RuvA(8)-RuvB(12)-Holliday junction (HJ) complex. HJ DNA is sandwiched between 2 RuvA tetramers; dsDNA enters through RuvA and exits via RuvB. An RuvB hexamer assembles on each DNA strand where it exits the tetramer. Each RuvB hexamer is contacted by two RuvA subunits (via domain III) on 2 adjacent RuvB subunits; this complex drives branch migration. In the full resolvosome a probable DNA-RuvA(4)-RuvB(12)-RuvC(2) complex forms which resolves the HJ.

It localises to the cytoplasm. It catalyses the reaction ATP + H2O = ADP + phosphate + H(+). Functionally, the RuvA-RuvB-RuvC complex processes Holliday junction (HJ) DNA during genetic recombination and DNA repair, while the RuvA-RuvB complex plays an important role in the rescue of blocked DNA replication forks via replication fork reversal (RFR). RuvA specifically binds to HJ cruciform DNA, conferring on it an open structure. The RuvB hexamer acts as an ATP-dependent pump, pulling dsDNA into and through the RuvAB complex. RuvB forms 2 homohexamers on either side of HJ DNA bound by 1 or 2 RuvA tetramers; 4 subunits per hexamer contact DNA at a time. Coordinated motions by a converter formed by DNA-disengaged RuvB subunits stimulates ATP hydrolysis and nucleotide exchange. Immobilization of the converter enables RuvB to convert the ATP-contained energy into a lever motion, pulling 2 nucleotides of DNA out of the RuvA tetramer per ATP hydrolyzed, thus driving DNA branch migration. The RuvB motors rotate together with the DNA substrate, which together with the progressing nucleotide cycle form the mechanistic basis for DNA recombination by continuous HJ branch migration. Branch migration allows RuvC to scan DNA until it finds its consensus sequence, where it cleaves and resolves cruciform DNA. In Bacillus cereus (strain B4264), this protein is Holliday junction branch migration complex subunit RuvB.